A 579-amino-acid polypeptide reads, in one-letter code: Nuclear receptor coactivator 5 (579 aa).

Met-1 carries the post-translational modification N-acetylmethionine. The tract at residues 1–77 (MNTAPSRPSP…DIRDHRDSRS (77 aa)) is disordered. The segment at 1–158 (MNTAPSRPSP…RDSFDGRGPP (158 aa)) is transcription repression. Thr-3 is modified (phosphothreonine). 9 positions are modified to phosphoserine: Ser-9, Ser-21, Ser-29, Ser-34, Ser-96, Ser-116, Ser-126, Ser-143, and Ser-151. Basic and acidic residues predominate over residues 11-77 (TRRDPYSFGD…DIRDHRDSRS (67 aa)). The interval 148–172 (YRDSFDGRGPPGPESQSRAKERLKR) is disordered. The residue at position 274 (Thr-274) is a Phosphothreonine. The short motif at 345 to 349 (LINLL) is the LXXLL motif element. Residues Ser-378 and Ser-381 each carry the phosphoserine modification. 2 disordered regions span residues 378 to 428 (SADS…PTSQ) and 446 to 529 (ANSS…RPVS). Low complexity-rich tracts occupy residues 395–420 (SGSS…ATPT) and 446–460 (ANSS…TGSS). The interval 458-579 (GSSQNQNFST…APMGSYQRHY (122 aa)) is transcription activation. The segment covering 461–485 (QNQNFSTAANSQPQQRPQASGNQPP) has biased composition (polar residues).

As to quaternary structure, binds HTATIP2/TIP30. Interacts with YLPM1. Forms a complex with ILF2, ILF3, YLPM1, KHDRBS1, RBMX and PPP1CA.

The protein resides in the nucleus. Nuclear receptor coregulator that can have both coactivator and corepressor functions. Interacts with nuclear receptors for steroids (ESR1 and ESR2) independently of the steroid binding domain (AF-2) of the ESR receptors, and with the orphan nuclear receptor NR1D2. Involved in the coactivation of nuclear steroid receptors (ER) as well as the corepression of MYC in response to 17-beta-estradiol (E2). This is Nuclear receptor coactivator 5 (Ncoa5) from Mus musculus (Mouse).